The chain runs to 67 residues: Large ribosomal subunit protein uL29c (67 aa).

It belongs to the universal ribosomal protein uL29 family.

It is found in the plastid. Its subcellular location is the chloroplast. In Porphyra purpurea (Red seaweed), this protein is Large ribosomal subunit protein uL29c (rpl29).